The chain runs to 33 residues: Cytochrome b6-f complex subunit 7 (33 aa).

A helical transmembrane segment spans residues 5-25; sequence IFNTAVITFTLVLVGLGAGYL.

This sequence belongs to the PetM family. In terms of assembly, the 4 large subunits of the cytochrome b6-f complex are cytochrome b6, subunit IV (17 kDa polypeptide, PetD), cytochrome f and the Rieske protein, while the 4 small subunits are PetG, PetL, PetM and PetN. The complex functions as a dimer.

The protein resides in the cellular thylakoid membrane. Functionally, component of the cytochrome b6-f complex, which mediates electron transfer between photosystem II (PSII) and photosystem I (PSI), cyclic electron flow around PSI, and state transitions. The chain is Cytochrome b6-f complex subunit 7 from Thermosynechococcus vestitus (strain NIES-2133 / IAM M-273 / BP-1).